The primary structure comprises 457 residues: Bifunctional protein GlmU (457 aa).

The tract at residues M1–L230 is pyrophosphorylase. UDP-N-acetyl-alpha-D-glucosamine contacts are provided by residues L12–G15, K26, Q78, G83–T84, Y105–D107, G140, E155, N170, and N228. D107 serves as a coordination point for Mg(2+). Residue N228 coordinates Mg(2+). The segment at W231–Q251 is linker. The segment at G252–T457 is N-acetyltransferase. Residues R334 and K352 each contribute to the UDP-N-acetyl-alpha-D-glucosamine site. The Proton acceptor role is filled by H364. Y367 and N378 together coordinate UDP-N-acetyl-alpha-D-glucosamine. Residues A381, N387 to Y388, S406, A424, and R441 contribute to the acetyl-CoA site.

The protein in the N-terminal section; belongs to the N-acetylglucosamine-1-phosphate uridyltransferase family. It in the C-terminal section; belongs to the transferase hexapeptide repeat family. In terms of assembly, homotrimer. Mg(2+) serves as cofactor.

It localises to the cytoplasm. It catalyses the reaction alpha-D-glucosamine 1-phosphate + acetyl-CoA = N-acetyl-alpha-D-glucosamine 1-phosphate + CoA + H(+). It carries out the reaction N-acetyl-alpha-D-glucosamine 1-phosphate + UTP + H(+) = UDP-N-acetyl-alpha-D-glucosamine + diphosphate. It participates in nucleotide-sugar biosynthesis; UDP-N-acetyl-alpha-D-glucosamine biosynthesis; N-acetyl-alpha-D-glucosamine 1-phosphate from alpha-D-glucosamine 6-phosphate (route II): step 2/2. Its pathway is nucleotide-sugar biosynthesis; UDP-N-acetyl-alpha-D-glucosamine biosynthesis; UDP-N-acetyl-alpha-D-glucosamine from N-acetyl-alpha-D-glucosamine 1-phosphate: step 1/1. It functions in the pathway bacterial outer membrane biogenesis; LPS lipid A biosynthesis. Functionally, catalyzes the last two sequential reactions in the de novo biosynthetic pathway for UDP-N-acetylglucosamine (UDP-GlcNAc). The C-terminal domain catalyzes the transfer of acetyl group from acetyl coenzyme A to glucosamine-1-phosphate (GlcN-1-P) to produce N-acetylglucosamine-1-phosphate (GlcNAc-1-P), which is converted into UDP-GlcNAc by the transfer of uridine 5-monophosphate (from uridine 5-triphosphate), a reaction catalyzed by the N-terminal domain. This is Bifunctional protein GlmU from Xylella fastidiosa (strain M23).